Here is a 132-residue protein sequence, read N- to C-terminus: Small ribosomal subunit protein uS8 (132 aa).

Belongs to the universal ribosomal protein uS8 family. In terms of assembly, part of the 30S ribosomal subunit. Contacts proteins S5 and S12.

In terms of biological role, one of the primary rRNA binding proteins, it binds directly to 16S rRNA central domain where it helps coordinate assembly of the platform of the 30S subunit. This Streptococcus mutans serotype c (strain ATCC 700610 / UA159) protein is Small ribosomal subunit protein uS8.